Reading from the N-terminus, the 262-residue chain is DNA-directed RNA polymerase subunit Rpo3 (262 aa).

It belongs to the archaeal Rpo3/eukaryotic RPB3 RNA polymerase subunit family. Part of the RNA polymerase complex.

Its subcellular location is the cytoplasm. The enzyme catalyses RNA(n) + a ribonucleoside 5'-triphosphate = RNA(n+1) + diphosphate. Functionally, DNA-dependent RNA polymerase (RNAP) catalyzes the transcription of DNA into RNA using the four ribonucleoside triphosphates as substrates. The chain is DNA-directed RNA polymerase subunit Rpo3 from Pyrobaculum neutrophilum (strain DSM 2338 / JCM 9278 / NBRC 100436 / V24Sta) (Thermoproteus neutrophilus).